A 72-amino-acid polypeptide reads, in one-letter code: DNA-directed RNA polymerase subunit epsilon (72 aa).

Belongs to the RNA polymerase subunit epsilon family. RNAP is composed of a core of 2 alpha, a beta and a beta' subunit. The core is associated with a delta subunit, and at least one of epsilon or omega. When a sigma factor is associated with the core the holoenzyme is formed, which can initiate transcription.

The enzyme catalyses RNA(n) + a ribonucleoside 5'-triphosphate = RNA(n+1) + diphosphate. In terms of biological role, a non-essential component of RNA polymerase (RNAP). This Levilactobacillus brevis (strain ATCC 367 / BCRC 12310 / CIP 105137 / JCM 1170 / LMG 11437 / NCIMB 947 / NCTC 947) (Lactobacillus brevis) protein is DNA-directed RNA polymerase subunit epsilon.